A 183-amino-acid polypeptide reads, in one-letter code: Adenine phosphoribosyltransferase (183 aa).

It belongs to the purine/pyrimidine phosphoribosyltransferase family. As to quaternary structure, homodimer.

It localises to the cytoplasm. The enzyme catalyses AMP + diphosphate = 5-phospho-alpha-D-ribose 1-diphosphate + adenine. The protein operates within purine metabolism; AMP biosynthesis via salvage pathway; AMP from adenine: step 1/1. Catalyzes a salvage reaction resulting in the formation of AMP, that is energically less costly than de novo synthesis. The sequence is that of Adenine phosphoribosyltransferase from Escherichia coli O157:H7.